We begin with the raw amino-acid sequence, 210 residues long: Uridine kinase (210 aa).

12–19 (GGSGSGKT) contacts ATP.

The protein belongs to the uridine kinase family.

It is found in the cytoplasm. The catalysed reaction is uridine + ATP = UMP + ADP + H(+). The enzyme catalyses cytidine + ATP = CMP + ADP + H(+). It functions in the pathway pyrimidine metabolism; CTP biosynthesis via salvage pathway; CTP from cytidine: step 1/3. Its pathway is pyrimidine metabolism; UMP biosynthesis via salvage pathway; UMP from uridine: step 1/1. The chain is Uridine kinase from Bacillus pumilus (strain SAFR-032).